The chain runs to 566 residues: Transcription factor P14E8.02 (566 aa).

The segment at 1–32 (MNISSQNVLLPSPIPSSSPMASHKKSWLSKHP) is disordered. Position 73 is a phosphoserine (S73). The 52-residue stretch at 86–137 (NKIGRSSQQCDHVLSTVDKAISRVHAIVTCTQDRMIIECVGWNGMIVSDKMR) folds into the FHA domain. Disordered stretches follow at residues 191-217 (EENR…SQDY), 269-291 (DCSK…LLNG), 312-334 (ESDD…IEES), and 364-437 (FTNH…TKEN). The segment covering 314 to 330 (DDLDKNEEISEGEEYTP) has biased composition (acidic residues). Polar residues-rich tracts occupy residues 373 to 383 (NSNITTSNDSP) and 414 to 428 (DENT…PSSH). A phosphoserine mark is found at S379 and S382.

The protein belongs to the PLM2/TOS4 family.

It is found in the nucleus. Functionally, probable transcriptional regulatory protein Required for G1/S progression. This is Transcription factor P14E8.02 from Schizosaccharomyces pombe (strain 972 / ATCC 24843) (Fission yeast).